A 199-amino-acid chain; its full sequence is GTP cyclohydrolase-2 (199 aa).

49-53 (RIHSE) contributes to the GTP binding site. Zn(2+)-binding residues include C54, C65, and C67. GTP contacts are provided by residues Q70, 92-94 (EGR), and T114. D126 functions as the Proton acceptor in the catalytic mechanism. The Nucleophile role is filled by R128. GTP contacts are provided by T149 and K154.

The protein belongs to the GTP cyclohydrolase II family. In terms of assembly, homodimer. The cofactor is Zn(2+).

The enzyme catalyses GTP + 4 H2O = 2,5-diamino-6-hydroxy-4-(5-phosphoribosylamino)-pyrimidine + formate + 2 phosphate + 3 H(+). The protein operates within cofactor biosynthesis; riboflavin biosynthesis; 5-amino-6-(D-ribitylamino)uracil from GTP: step 1/4. Catalyzes the conversion of GTP to 2,5-diamino-6-ribosylamino-4(3H)-pyrimidinone 5'-phosphate (DARP), formate and pyrophosphate. The protein is GTP cyclohydrolase-2 of Proteus mirabilis (strain HI4320).